Consider the following 269-residue polypeptide: Glutamate racemase (269 aa).

Substrate is bound by residues 7–8 (DS) and 39–40 (YG). The active-site Proton donor/acceptor is the Cys70. 71–72 (NT) contacts substrate. The active-site Proton donor/acceptor is the Cys194. 195–196 (TH) is a substrate binding site.

This sequence belongs to the aspartate/glutamate racemases family.

It carries out the reaction L-glutamate = D-glutamate. It participates in cell wall biogenesis; peptidoglycan biosynthesis. Functionally, provides the (R)-glutamate required for cell wall biosynthesis. This Ruegeria pomeroyi (strain ATCC 700808 / DSM 15171 / DSS-3) (Silicibacter pomeroyi) protein is Glutamate racemase.